A 393-amino-acid chain; its full sequence is Probable xylan O-acetyltransferase 11 (393 aa).

At 1-9 (MHQPAIMQR) the chain is on the cytoplasmic side. The helical; Signal-anchor for type II membrane protein transmembrane segment at 10–26 (ALAVVALLAAAAAIAAA) threads the bilayer. At 27–393 (QGESPELLPF…LFFPARDEAI (367 aa)) the chain is on the lumenal side. 4 cysteine pairs are disulfide-bonded: Cys-45–Cys-96, Cys-67–Cys-132, Cys-76–Cys-368, and Cys-283–Cys-364. Residue Asn-102 is glycosylated (N-linked (GlcNAc...) asparagine). The GDS motif motif lies at 119-121 (GDS). The active-site Nucleophile is Ser-121. A glycan (N-linked (GlcNAc...) asparagine) is linked at Asn-325. Asp-363 serves as the catalytic Proton donor. The short motif at 363 to 366 (DCTH) is the DXXH motif element. His-366 (proton acceptor) is an active-site residue.

The protein belongs to the PC-esterase family. TBL subfamily. Expressed in roots, leaves and stems.

Its subcellular location is the golgi apparatus membrane. In terms of biological role, probable xylan acetyltransferase required for 2-O- and 3-O-monoacetylation of xylosyl residues in xylan. Possesses extremely low activity in vitro. This chain is Probable xylan O-acetyltransferase 11, found in Oryza sativa subsp. japonica (Rice).